The primary structure comprises 318 residues: 2-dehydro-3-deoxygalactonokinase (318 aa).

Substrate contacts are provided by residues 35–39, Tyr-90, 105–107, and Arg-169; these read GAESN and YDR. Residues 167-169, 228-233, and 257-260 each bind ATP; these read NYR, TRGEDG, and GTGD. Residues Asp-260 and Asp-296 each coordinate substrate. Asp-260 acts as the Proton acceptor in catalysis.

Belongs to the carbohydrate kinase PfkB family. Homohexamer.

It catalyses the reaction 2-dehydro-3-deoxy-D-galactonate + ATP = 2-dehydro-3-deoxy-6-phospho-D-galactonate + ADP + H(+). Functionally, involved in galactose catabolism. Catalyzes the phosphorylation of 2-keto-3-deoxygalactonate (KDGal) to produce 2-keto-3-deoxy-6-phosphogalactonate (KDPGal). Can also phosphorylate 2-keto-3-deoxygluconate (KDG) to 2-keto-3-deoxy-6-phosphogluconate (KDPG), but the catalytic efficiency for KDGal is 50-fold higher than for KDG. The sequence is that of 2-dehydro-3-deoxygalactonokinase from Haloferax volcanii (strain ATCC 29605 / DSM 3757 / JCM 8879 / NBRC 14742 / NCIMB 2012 / VKM B-1768 / DS2) (Halobacterium volcanii).